The following is a 398-amino-acid chain: Elongation factor Tu (398 aa).

The region spanning 10 to 207 (KPHVNIGTIG…TVDSYIPEPE (198 aa)) is the tr-type G domain. Residues 19–26 (GHVDHGKT) are G1. 19-26 (GHVDHGKT) contributes to the GTP binding site. Threonine 26 is a binding site for Mg(2+). The segment at 63-67 (GITIN) is G2. The tract at residues 84 to 87 (DAPG) is G3. GTP is bound by residues 84–88 (DAPGH) and 139–142 (NKVD). The segment at 139–142 (NKVD) is G4. The G5 stretch occupies residues 177–179 (SAL).

This sequence belongs to the TRAFAC class translation factor GTPase superfamily. Classic translation factor GTPase family. EF-Tu/EF-1A subfamily. Monomer.

The protein resides in the cytoplasm. It carries out the reaction GTP + H2O = GDP + phosphate + H(+). Functionally, GTP hydrolase that promotes the GTP-dependent binding of aminoacyl-tRNA to the A-site of ribosomes during protein biosynthesis. This is Elongation factor Tu from Streptococcus pyogenes serotype M28 (strain MGAS6180).